The following is a 208-amino-acid chain: DNA-binding protein HupB (208 aa).

A bacterial histone-like domain region spans residues 1-90; that stretch reads MNKAELIDVL…PGAQFKAVIS (90 aa). Lys3 is subject to N6-acetyllysine. N6-acetyllysine; alternate; partial is present on Lys3. Lys3 is modified (N6-methyllysine; alternate; partial). Lys72 is modified (N6-acetyllysine; partial). An N6-methyllysine; partial modification is found at Lys86. The tract at residues 92-208 is C-terminus, required for nucleoid localization; that stretch reads AQKLPADGPA…KKAPAKKGRR (117 aa). Residues Lys94 and Lys103 each carry the N6-acetyllysine; alternate; partial modification. N6-methyllysine; alternate; partial is present on residues Lys94 and Lys103. Residues 96–208 are disordered; the sequence is PADGPAVKRG…KKAPAKKGRR (113 aa). Residues 101–205 form a degenerate repeats region region; that stretch reads AVKRGVTAGP…AAAKKAPAKK (105 aa). A compositionally biased stretch (basic residues) spans 113–208; it reads KAAKKAPAKK…KKAPAKKGRR (96 aa). Lys116, Lys136, Lys149, and Lys168 each carry N6-acetyllysine.

This sequence belongs to the bacterial histone-like protein family. Long actinobacterial subfamily. As to quaternary structure, may form oligomers. Interacts with RNase E (rne). In terms of processing, in addition to the identifed modifications, is also methylated on one of Arg-53; Arg-54 or Arg-55.

Its subcellular location is the cytoplasm. The protein resides in the nucleoid. It localises to the secreted. The protein localises to the cell wall. The catalysed reaction is 4 Fe(2+) + O2 + 4 H(+) = 4 Fe(3+) + 2 H2O. Its activity is regulated as follows. Trans-stilbene derivative 4,4'-[(E)-ethene-1,2 diylbis({5[(phenylcarbonyl)amino]benzene-2,1-diyl}sulfonylimino)] dibenzoic acid (SD1) inhibits DNA binding at 50 uM. SD1 does not inhibit growth in a range of 3-1600 uM. In terms of biological role, a nucleoid-associated protein (NAP) that plays a crucial role in local chromosome architecture. Helps organize newly replicated oriC proximal regions and contributes to the timing of replication initiation and coordinating replication with chromosome segregation. There are between 30,000-60,000 molecules in a log phase cell; the protein-DNA complex is dynamic during the cell cycle, with more complexes near the cell ends. Binds irregularly along the chromosome with higher binding near the origin of replication (oriC) and lowest binding near the chromosome terminus (ter). Binds DNA non-sequence specifically via both its N- and C-terminal domains with high affinity, has no preference for linear or supercoiled DNA. Binds four-way junction DNA. Represses T7 RNA polymerase in vitro. The C-terminal domain enhances DNA end-joining in vitro in the presence of T4 DNA ligase. RNase E and HupB jointly contribute to cellular adaptation to changing growth conditions and survival during antibiotic treatment. Functionally, has ferroxidase activity, converts Fe(2+) into Fe(3+). Binds Fe(3+) but not Fe(2+); prevents the generation of hydroxyl radicals by the Fenton reaction and thus protects DNA from damage. May function in iron storage. Plays a role in epigenetic resistance to antibiotics. Growth on levels of isoniazid (INH) near the minimal inhibitory concentration (MIC) kills most bacteria. The surviving cells grow as either large or small colony variants (SCV), evidence suggest SCVs are associated with persistent infections. Mutating this protein leads to specific loss of SCVs. Its function is as follows. May play a role in cell wall assembly. This chain is DNA-binding protein HupB, found in Mycolicibacterium smegmatis (strain ATCC 700084 / mc(2)155) (Mycobacterium smegmatis).